The chain runs to 475 residues: V-type ATP synthase beta chain (475 aa).

This sequence belongs to the ATPase alpha/beta chains family.

Its function is as follows. Produces ATP from ADP in the presence of a proton gradient across the membrane. The V-type beta chain is a regulatory subunit. The chain is V-type ATP synthase beta chain from Anaeromyxobacter dehalogenans (strain 2CP-C).